The following is a 194-amino-acid chain: Ras-related protein Rab-22A (194 aa).

GTP is bound at residue 12–20 (GDTGVGKSS). The short motif at 34 to 42 (INPTIGASF) is the Effector region element. GTP is bound by residues 60-64 (DTAGQ), 118-121 (NKCD), and 148-150 (SAK). The segment at 170–194 (DANPASGGKGFKLRRQPSEPKRSCC) is disordered. The span at 185–194 (QPSEPKRSCC) shows a compositional bias: basic and acidic residues. Residues Cys193 and Cys194 are each lipidated (S-geranylgeranyl cysteine).

Belongs to the small GTPase superfamily. Rab family. Binds EEA1. Interacts (in its GTP-bound form) with RINL. Interacts directly with ZFYVE20. Interacts (in its GTP-bound form) with RABGEF1. Detected in brain and heart, and at lower levels in lung and spleen.

Its subcellular location is the endosome membrane. The protein resides in the cell membrane. It is found in the early endosome. It localises to the late endosome. The protein localises to the cell projection. Its subcellular location is the ruffle. The protein resides in the cytoplasmic vesicle. It is found in the phagosome. It localises to the phagosome membrane. In terms of biological role, plays a role in endocytosis and intracellular protein transport. Mediates trafficking of TF from early endosomes to recycling endosomes. Required for NGF-mediated endocytosis of NTRK1, and subsequent neurite outgrowth. Binds GTP and GDP and has low GTPase activity. Alternates between a GTP-bound active form and a GDP-bound inactive form. The polypeptide is Ras-related protein Rab-22A (Rab22a) (Mus musculus (Mouse)).